The following is a 319-amino-acid chain: Extracellular phospholipase A1 (319 aa).

An N-terminal signal peptide occupies residues 1–24 (MSMPLSFTSAVSPVAAIPTPRAAA).

The catalysed reaction is a 1,2-diacyl-sn-glycero-3-phosphocholine + H2O = a 2-acyl-sn-glycero-3-phosphocholine + a fatty acid + H(+). This chain is Extracellular phospholipase A1 (phlA), found in Serratia liquefaciens.